A 392-amino-acid chain; its full sequence is Formate-dependent phosphoribosylglycinamide formyltransferase (392 aa).

N(1)-(5-phospho-beta-D-ribosyl)glycinamide contacts are provided by residues 22-23 (EL) and Glu-82. ATP-binding positions include Arg-114, Lys-155, 160–165 (SSGKGQ), 195–198 (EGVV), and Glu-203. The ATP-grasp domain occupies 119-308 (RLAAEELGLP…EFALHVRAFL (190 aa)). Mg(2+) is bound by residues Glu-267 and Glu-279. Residues Asp-286, Lys-355, and 362–363 (RR) contribute to the N(1)-(5-phospho-beta-D-ribosyl)glycinamide site.

Belongs to the PurK/PurT family. As to quaternary structure, homodimer.

It catalyses the reaction N(1)-(5-phospho-beta-D-ribosyl)glycinamide + formate + ATP = N(2)-formyl-N(1)-(5-phospho-beta-D-ribosyl)glycinamide + ADP + phosphate + H(+). Its pathway is purine metabolism; IMP biosynthesis via de novo pathway; N(2)-formyl-N(1)-(5-phospho-D-ribosyl)glycinamide from N(1)-(5-phospho-D-ribosyl)glycinamide (formate route): step 1/1. In terms of biological role, involved in the de novo purine biosynthesis. Catalyzes the transfer of formate to 5-phospho-ribosyl-glycinamide (GAR), producing 5-phospho-ribosyl-N-formylglycinamide (FGAR). Formate is provided by PurU via hydrolysis of 10-formyl-tetrahydrofolate. This Salmonella arizonae (strain ATCC BAA-731 / CDC346-86 / RSK2980) protein is Formate-dependent phosphoribosylglycinamide formyltransferase.